The chain runs to 271 residues: 3-methyl-2-oxobutanoate hydroxymethyltransferase (271 aa).

2 residues coordinate Mg(2+): aspartate 44 and aspartate 83. 3-methyl-2-oxobutanoate is bound by residues 44 to 45 (DS), aspartate 83, and lysine 112. Position 114 (glutamate 114) interacts with Mg(2+). The active-site Proton acceptor is glutamate 181.

The protein belongs to the PanB family. In terms of assembly, homodecamer; pentamer of dimers. Mg(2+) serves as cofactor.

Its subcellular location is the cytoplasm. It catalyses the reaction 3-methyl-2-oxobutanoate + (6R)-5,10-methylene-5,6,7,8-tetrahydrofolate + H2O = 2-dehydropantoate + (6S)-5,6,7,8-tetrahydrofolate. Its pathway is cofactor biosynthesis; coenzyme A biosynthesis. Its function is as follows. Catalyzes the reversible reaction in which hydroxymethyl group from 5,10-methylenetetrahydrofolate is transferred onto alpha-ketoisovalerate to form ketopantoate. This Staphylothermus marinus (strain ATCC 43588 / DSM 3639 / JCM 9404 / F1) protein is 3-methyl-2-oxobutanoate hydroxymethyltransferase.